A 118-amino-acid polypeptide reads, in one-letter code: Mating-type P-specific polypeptide Pc (118 aa).

Positions 29–97 (KTTIYKNGFM…VRKQIAKLER (69 aa)) form a DNA-binding region, HMG box.

It is found in the nucleus. Mating type proteins are sequence specific DNA-binding proteins that act as master switches in yeast differentiation by controlling gene expression in a cell type-specific fashion. Required for conjugation and efficient meiosis. The polypeptide is Mating-type P-specific polypeptide Pc (matPc) (Schizosaccharomyces kambucha (Fission yeast)).